The sequence spans 660 residues: DNA mismatch repair protein MutL (660 aa).

The protein belongs to the DNA mismatch repair MutL/HexB family.

Functionally, this protein is involved in the repair of mismatches in DNA. It is required for dam-dependent methyl-directed DNA mismatch repair. May act as a 'molecular matchmaker', a protein that promotes the formation of a stable complex between two or more DNA-binding proteins in an ATP-dependent manner without itself being part of a final effector complex. This Streptococcus equi subsp. zooepidemicus (strain MGCS10565) protein is DNA mismatch repair protein MutL.